Reading from the N-terminus, the 309-residue chain is Electron transfer flavoprotein subunit alpha (309 aa).

253–281 (LYIAVGISGAIQHLAGMKDSKVIVAINKD) is a binding site for FAD.

This sequence belongs to the ETF alpha-subunit/FixB family. In terms of assembly, heterodimer of an alpha and a beta subunit. The cofactor is FAD.

Its function is as follows. The electron transfer flavoprotein serves as a specific electron acceptor for other dehydrogenases. It transfers the electrons to the main respiratory chain via ETF-ubiquinone oxidoreductase (ETF dehydrogenase). The sequence is that of Electron transfer flavoprotein subunit alpha (etfA) from Pseudomonas aeruginosa (strain ATCC 15692 / DSM 22644 / CIP 104116 / JCM 14847 / LMG 12228 / 1C / PRS 101 / PAO1).